Here is a 67-residue protein sequence, read N- to C-terminus: Conotoxin Cl6.6b (67 aa).

An N-terminal signal peptide occupies residues 1–24 (MKLTCVLIAAVLLLAVCQLDSADA). The propeptide occupies 25-37 (TGYMRKNPSLRSP). 3 cysteine pairs are disulfide-bonded: Cys43–Cys57, Cys50–Cys61, and Cys56–Cys65.

The protein belongs to the conotoxin O1 superfamily. Expressed by the venom duct.

The protein resides in the secreted. In Californiconus californicus (California cone), this protein is Conotoxin Cl6.6b.